Reading from the N-terminus, the 143-residue chain is 6,7-dimethyl-8-ribityllumazine synthase (143 aa).

5-amino-6-(D-ribitylamino)uracil-binding positions include Phe-13, 45-47 (TFD), and 69-71 (CVI). 74–75 (ET) provides a ligand contact to (2S)-2-hydroxy-3-oxobutyl phosphate. The active-site Proton donor is the His-77. Leu-102 provides a ligand contact to 5-amino-6-(D-ribitylamino)uracil. Arg-117 is a (2S)-2-hydroxy-3-oxobutyl phosphate binding site.

It belongs to the DMRL synthase family.

It carries out the reaction (2S)-2-hydroxy-3-oxobutyl phosphate + 5-amino-6-(D-ribitylamino)uracil = 6,7-dimethyl-8-(1-D-ribityl)lumazine + phosphate + 2 H2O + H(+). It functions in the pathway cofactor biosynthesis; riboflavin biosynthesis; riboflavin from 2-hydroxy-3-oxobutyl phosphate and 5-amino-6-(D-ribitylamino)uracil: step 1/2. In terms of biological role, catalyzes the formation of 6,7-dimethyl-8-ribityllumazine by condensation of 5-amino-6-(D-ribitylamino)uracil with 3,4-dihydroxy-2-butanone 4-phosphate. This is the penultimate step in the biosynthesis of riboflavin. This Archaeoglobus fulgidus (strain ATCC 49558 / DSM 4304 / JCM 9628 / NBRC 100126 / VC-16) protein is 6,7-dimethyl-8-ribityllumazine synthase.